Consider the following 123-residue polypeptide: uncharacterized protein (123 aa).

This is an uncharacterized protein from Pasteurella multocida (strain Pm70).